The following is a 496-amino-acid chain: Lysine--tRNA ligase (496 aa).

Positions 409 and 416 each coordinate Mg(2+).

Belongs to the class-II aminoacyl-tRNA synthetase family. In terms of assembly, homodimer. The cofactor is Mg(2+).

The protein resides in the cytoplasm. It carries out the reaction tRNA(Lys) + L-lysine + ATP = L-lysyl-tRNA(Lys) + AMP + diphosphate. The sequence is that of Lysine--tRNA ligase from Streptococcus mutans serotype c (strain ATCC 700610 / UA159).